Consider the following 201-residue polypeptide: Glycerol-3-phosphate acyltransferase (201 aa).

5 helical membrane passes run A10 to I30, P59 to A79, A87 to F107, F116 to L136, and I161 to I181.

Belongs to the PlsY family. As to quaternary structure, probably interacts with PlsX.

Its subcellular location is the cell inner membrane. The enzyme catalyses an acyl phosphate + sn-glycerol 3-phosphate = a 1-acyl-sn-glycero-3-phosphate + phosphate. It functions in the pathway lipid metabolism; phospholipid metabolism. Catalyzes the transfer of an acyl group from acyl-phosphate (acyl-PO(4)) to glycerol-3-phosphate (G3P) to form lysophosphatidic acid (LPA). This enzyme utilizes acyl-phosphate as fatty acyl donor, but not acyl-CoA or acyl-ACP. The sequence is that of Glycerol-3-phosphate acyltransferase from Cereibacter sphaeroides (strain ATCC 17029 / ATH 2.4.9) (Rhodobacter sphaeroides).